Reading from the N-terminus, the 536-residue chain is MALTSFLPAPTQLSQDQLEAEERARSQRSLQTSLVSSRREPPPYGYRKGWIPRLLEDFGDGGAFPEIHVAQYPLDMGRKKKMSNALAIQVDPEGKIKYDAIARQGQSKDKVIYSKYTDLVPKEVMNADDPDLQRPDEEAIKEITEKTRVALEKSVSQKVAAAMPVRAADKLAPAQYIRYTPSQQGVAFNSGAKQRVIRMVEMQKEPMEPPRFKINKKIPRGPPSPPAPVMHSPSRKMTVKEQQEWKIPPCISNWKNAKGYTIPIDKRLAADGRGLQTVHINENFAKLAEALYIADRKAREAVEMRAQVERKMAQKEKEKHEEKLREMAQKARERRAGIKTHVEKEDGEARERDEIRHDRRKERQHDRNLSRAAPDKRSKLQRNENRDISEVIALGVPNPRTSNEVQYDQRLFNQSKGMDSGFAGGEDEIYNVYDQAWRGGKDMAQSIYRPSKNLDKDMYGDDLEARIKTNRFVPDKEFSGSDRKQRGREGPVQFEEDPFGLDKFLEEAKQHGGSKRPSDSSRPKEHEHEGKKRRKE.

The tract at residues 1-44 (MALTSFLPAPTQLSQDQLEAEERARSQRSLQTSLVSSRREPPPY) is disordered. A2 bears the N-acetylalanine mark. Phosphoserine is present on S14. A compositionally biased stretch (polar residues) spans 27–36 (QRSLQTSLVS). The interval 59-79 (GDGGAFPEIHVAQYPLDMGRK) is interaction with PPIL1. Glycyl lysine isopeptide (Lys-Gly) (interchain with G-Cter in SUMO2) cross-links involve residues K81, K97, K115, K122, K141, K158, and K170. Residues 174–339 (AQYIRYTPSQ…KARERRAGIK (166 aa)) form an SNW region. A phosphoserine mark is found at S182 and S190. K193 is covalently cross-linked (Glycyl lysine isopeptide (Lys-Gly) (interchain with G-Cter in SUMO2)). The tract at residues 212-233 (FKINKKIPRGPPSPPAPVMHSP) is disordered. S224, S232, and S234 each carry phosphoserine. Residues K240, K258, K286, K339, K344, K416, and K441 each participate in a glycyl lysine isopeptide (Lys-Gly) (interchain with G-Cter in SUMO2) cross-link. Residues 311 to 386 (KMAQKEKEKH…RSKLQRNENR (76 aa)) are disordered. S446 is subject to Phosphoserine. K452 participates in a covalent cross-link: Glycyl lysine isopeptide (Lys-Gly) (interchain with G-Cter in SUMO2). Composition is skewed to basic and acidic residues over residues 467-489 (IKTN…RGRE) and 503-530 (KFLE…EHEG). The tract at residues 467–536 (IKTNRFVPDK…EHEGKKRRKE (70 aa)) is disordered. Phosphoserine occurs at positions 479 and 481. A Glycyl lysine isopeptide (Lys-Gly) (interchain with G-Cter in SUMO2) cross-link involves residue K509.

Belongs to the SNW family. Identified in the spliceosome C complex. Associates with U4/U6-U5 tri-small nuclear ribonucleoproteins (U4/U6-U5 tri-snRNPs). Component of the minor spliceosome, which splices U12-type introns. Interacts with SKI, SMAD2,SMAD3, RBPJ, RB1, PABPN1, MAGEA1, SIRT1, FOXN3, U2AF2, PPIL1, DAXX and ATP1B4. Interacts with VDR and RXRA; preferentially associates with VDR:RXRA heterodimers. Interacts with NCOR2. Interacts with MAML1. Interacts with NOTCH1 NICD; the interaction involves multimerized NOTCH1 NICD. Forms a complex with NOTCH1 NICD and MAML1; the association is dissociated by RBPJ. Associates with positive transcription elongation factor b (P-TEFb). Component of the SNARP complex which consists at least of SNIP1, SNW1, THRAP3, BCLAF1 and PNN.

It localises to the nucleus. Functionally, involved in pre-mRNA splicing as component of the spliceosome. As a component of the minor spliceosome, involved in the splicing of U12-type introns in pre-mRNAs. Required in the specific splicing of CDKN1A pre-mRNA; the function probably involves the recruitment of U2AF2 to the mRNA. May recruit PPIL1 to the spliceosome. May be involved in cyclin-D1/CCND1 mRNA stability through the SNARP complex which associates with both the 3'end of the CCND1 gene and its mRNA. Involved in transcriptional regulation. Modulates TGF-beta-mediated transcription via association with SMAD proteins, MYOD1-mediated transcription via association with PABPN1, RB1-mediated transcriptional repression, and retinoid-X receptor (RXR)- and vitamin D receptor (VDR)-dependent gene transcription in a cell line-specific manner probably involving coactivators NCOA1 and GRIP1. Is involved in NOTCH1-mediated transcriptional activation. Binds to multimerized forms of Notch intracellular domain (NICD) and is proposed to recruit transcriptional coactivators such as MAML1 to form an intermediate preactivation complex which associates with DNA-bound CBF-1/RBPJ to form a transcriptional activation complex by releasing SNW1 and redundant NOTCH1 NICD. The protein is SNW domain-containing protein 1 (Snw1) of Mus musculus (Mouse).